The sequence spans 508 residues: MAMDWLGSIVSINCGDSLGVYQGRVSAVDQVSQTISLTRPFHNGVKCLVPEVTFRAGDITELKILEIPGPGDNQQVGDLHQTELGPSGVGYQMSISQNGTGKVVKKPASSSSAPQSIPKRTDVKSQDVAISPQQQQCSKSYVDRHMESLSQSKSFRRRHNSWSSSSRHPNQATPKKSGLKNGQMKNKDDECFGDDIEELPDTDFDFEGNLALFDKAAVFEEIDTYERRSGSRSRGVPNERPARYRHDENILESEPIVYRRITVPHSVSKEFCTDSGLVVPSVSYELHKKLLSVAEKHGLTLERRLEMTGVCASQMALTLLGGPNRLNPKNVHQRPTVALLCGPHVKGAQGISCGRHLANHDVQVILFLPNFVKMLESITNELSLFSKTQGQQVSSLRDLPASPVDLVINCLDCPENAFLRDQPWYKAAVAWANQNRAPVLSIDPPVHEVEQGIDAKWSLALGLPLPLGEHAGRVYLCDIGIPQQVFQEVGINYHSPFGCKFVIPLHSA.

The 68-residue stretch at 1-68 (MAMDWLGSIV…ITELKILEIP (68 aa)) folds into the Sm domain. Residues 1-79 (MAMDWLGSIV…PGDNQQVGDL (79 aa)) form a required for P-body targeting and interaction with DCP1A region. Residues 98-194 (NGTGKVVKKP…KNKDDECFGD (97 aa)) form a disordered region. 4 positions are modified to phosphoserine: S131, S138, S140, and S161. Residues 191–296 (CFGDDIEELP…HKKLLSVAEK (106 aa)) are required for interaction with DDX6. Positions 192–228 (FGDDIEELPDTDFDFEGNLALFDKAAVFEEIDTYERR) constitute a DFDF domain. One can recognise a YjeF N-terminal domain in the interval 283 to 487 (SYELHKKLLS…DIGIPQQVFQ (205 aa)).

The protein belongs to the EDC3 family. In terms of assembly, homodimer (via YjeF N-terminal domain). Forms a complex with DCP1A, DCP2, DDX6 and EDC4/HEDLS, within this complex directly interacts with DCP1A and DDX6. Interacts with ZFP36.

The protein resides in the cytoplasm. Its subcellular location is the P-body. Binds single-stranded RNA. Involved in the process of mRNA degradation and in the positive regulation of mRNA decapping. The polypeptide is Enhancer of mRNA-decapping protein 3 (Edc3) (Mus musculus (Mouse)).